A 433-amino-acid polypeptide reads, in one-letter code: Phosphoglycerate kinase, chloroplastic (433 aa).

The N-terminal 28 residues, 1–28 (GASFSLHVLSKINSYKSQSTKPIRGVAS), are a transit peptide targeting the chloroplast. Positions 51, 52, 54, 68, 90, 91, 93, 94, 149, 181, and 182 each coordinate (2R)-3-phosphoglycerate. Glycine 227 lines the ADP pocket. Glycine 227 contacts CDP. 2 residues coordinate AMP: lysine 229 and lysine 233. Lysine 233 contributes to the ATP binding site. Glycine 251 serves as a coordination point for ADP. Position 251 (glycine 251) interacts with CDP. Residues glycine 252 and glycine 324 each contribute to the AMP site. Residues glycine 252 and glycine 324 each coordinate ATP. Residues glycine 349 and phenylalanine 354 each contribute to the CDP site. An ADP-binding site is contributed by phenylalanine 354. Glutamate 355 is an AMP binding site. The ATP site is built by glutamate 355, aspartate 386, and serine 387. Aspartate 386 is a binding site for Mg(2+).

It belongs to the phosphoglycerate kinase family. Monomer. Requires Mg(2+) as cofactor.

It is found in the plastid. It localises to the chloroplast. The catalysed reaction is (2R)-3-phosphoglycerate + ATP = (2R)-3-phospho-glyceroyl phosphate + ADP. The protein operates within carbohydrate biosynthesis; Calvin cycle. The polypeptide is Phosphoglycerate kinase, chloroplastic (Spinacia oleracea (Spinach)).